The following is a 342-amino-acid chain: D-erythrose-4-phosphate dehydrogenase (342 aa).

NAD(+) is bound at residue 11–12 (RI). Substrate is bound by residues 153 to 155 (SCT), Arg-199, 212 to 213 (TK), and Arg-235. Cys-154 acts as the Nucleophile in catalysis. Residue Asn-317 participates in NAD(+) binding.

The protein belongs to the glyceraldehyde-3-phosphate dehydrogenase family. Epd subfamily. Homotetramer.

The protein localises to the cytoplasm. It catalyses the reaction D-erythrose 4-phosphate + NAD(+) + H2O = 4-phospho-D-erythronate + NADH + 2 H(+). It functions in the pathway cofactor biosynthesis; pyridoxine 5'-phosphate biosynthesis; pyridoxine 5'-phosphate from D-erythrose 4-phosphate: step 1/5. Catalyzes the NAD-dependent conversion of D-erythrose 4-phosphate to 4-phosphoerythronate. This Shewanella denitrificans (strain OS217 / ATCC BAA-1090 / DSM 15013) protein is D-erythrose-4-phosphate dehydrogenase.